The sequence spans 361 residues: tRNA/tmRNA (uracil-C(5))-methyltransferase (361 aa).

S-adenosyl-L-methionine-binding residues include Q183, Y211, N216, E232, and D294. The Nucleophile role is filled by C319. E353 functions as the Proton acceptor in the catalytic mechanism.

It belongs to the class I-like SAM-binding methyltransferase superfamily. RNA M5U methyltransferase family. TrmA subfamily.

The catalysed reaction is uridine(54) in tRNA + S-adenosyl-L-methionine = 5-methyluridine(54) in tRNA + S-adenosyl-L-homocysteine + H(+). It catalyses the reaction uridine(341) in tmRNA + S-adenosyl-L-methionine = 5-methyluridine(341) in tmRNA + S-adenosyl-L-homocysteine + H(+). In terms of biological role, dual-specificity methyltransferase that catalyzes the formation of 5-methyluridine at position 54 (m5U54) in all tRNAs, and that of position 341 (m5U341) in tmRNA (transfer-mRNA). This is tRNA/tmRNA (uracil-C(5))-methyltransferase from Acinetobacter baumannii (strain AYE).